The primary structure comprises 249 residues: Zinc import ATP-binding protein ZnuC (249 aa).

The ABC transporter domain occupies methionine 1–glycine 219. ATP is bound at residue glycine 36–serine 43.

This sequence belongs to the ABC transporter superfamily. Zinc importer (TC 3.A.1.15.5) family. As to quaternary structure, the complex is composed of two ATP-binding proteins (ZnuC), two transmembrane proteins (ZnuB) and a solute-binding protein (ZnuA).

The protein resides in the cell inner membrane. It catalyses the reaction Zn(2+)(out) + ATP(in) + H2O(in) = Zn(2+)(in) + ADP(in) + phosphate(in) + H(+)(in). Functionally, part of the ABC transporter complex ZnuABC involved in zinc import. Responsible for energy coupling to the transport system. This chain is Zinc import ATP-binding protein ZnuC, found in Ruegeria sp. (strain TM1040) (Silicibacter sp.).